The following is a 916-amino-acid chain: Protein translocase subunit SecA (916 aa).

ATP-binding positions include Gln-87, 105-109 (GEGKT), and Asp-512. Positions 857–916 (QHAEAPSMEQAVAGEDEELPEGPAPVVPLEPVRNEQKIGRNEPCPCGSGKKYKHCHGQLD) are disordered. Residues Cys-900, Cys-902, Cys-911, and His-912 each contribute to the Zn(2+) site. Residues 906–916 (KKYKHCHGQLD) are compositionally biased toward basic residues.

Belongs to the SecA family. As to quaternary structure, monomer and homodimer. Part of the essential Sec protein translocation apparatus which comprises SecA, SecYEG and auxiliary proteins SecDF-YajC and YidC. Requires Zn(2+) as cofactor.

Its subcellular location is the cell inner membrane. It is found in the cytoplasm. It carries out the reaction ATP + H2O + cellular proteinSide 1 = ADP + phosphate + cellular proteinSide 2.. In terms of biological role, part of the Sec protein translocase complex. Interacts with the SecYEG preprotein conducting channel. Has a central role in coupling the hydrolysis of ATP to the transfer of proteins into and across the cell membrane, serving both as a receptor for the preprotein-SecB complex and as an ATP-driven molecular motor driving the stepwise translocation of polypeptide chains across the membrane. This chain is Protein translocase subunit SecA, found in Pseudomonas paraeruginosa (strain DSM 24068 / PA7) (Pseudomonas aeruginosa (strain PA7)).